A 51-amino-acid polypeptide reads, in one-letter code: Large ribosomal subunit protein eL39 (51 aa).

This sequence belongs to the eukaryotic ribosomal protein eL39 family. Part of the 50S ribosomal subunit.

The chain is Large ribosomal subunit protein eL39 from Pyrococcus furiosus (strain ATCC 43587 / DSM 3638 / JCM 8422 / Vc1).